Reading from the N-terminus, the 385-residue chain is DNA replication and repair protein RecF (385 aa).

30 to 37 (GPNGYGKT) contributes to the ATP binding site.

The protein belongs to the RecF family.

Its subcellular location is the cytoplasm. The RecF protein is involved in DNA metabolism; it is required for DNA replication and normal SOS inducibility. RecF binds preferentially to single-stranded, linear DNA. It also seems to bind ATP. In Mycobacterium bovis (strain ATCC BAA-935 / AF2122/97), this protein is DNA replication and repair protein RecF.